An 858-amino-acid polypeptide reads, in one-letter code: Leucine--tRNA ligase (858 aa).

The 'HIGH' region signature appears at 42–52 (PYPSGRLHMGH). The short motif at 618-622 (KMSKS) is the 'KMSKS' region element. Lysine 621 provides a ligand contact to ATP.

Belongs to the class-I aminoacyl-tRNA synthetase family.

The protein localises to the cytoplasm. The enzyme catalyses tRNA(Leu) + L-leucine + ATP = L-leucyl-tRNA(Leu) + AMP + diphosphate. This is Leucine--tRNA ligase from Vibrio cholerae serotype O1 (strain ATCC 39541 / Classical Ogawa 395 / O395).